We begin with the raw amino-acid sequence, 1128 residues long: Nck-associated protein 1 (1128 aa).

The interval 640–665 (AVNKKSKKQTGKKGEPEREKPGVESM) is disordered. Over residues 651–665 (KKGEPEREKPGVESM) the composition is skewed to basic and acidic residues. A helical membrane pass occupies residues 995–1015 (IACLLMVFVAVSLPTLASNVM).

It belongs to the HEM-1/HEM-2 family.

It localises to the cell membrane. It is found in the cell projection. Its subcellular location is the lamellipodium membrane. Functionally, part of the WAVE complex that regulates lamellipodia formation. The WAVE complex regulates actin filament reorganization via its interaction with the Arp2/3 complex. Actin remodeling activity is regulated by RAC1. Plays a role in neural tube closure. The sequence is that of Nck-associated protein 1 (nckap1) from Xenopus laevis (African clawed frog).